We begin with the raw amino-acid sequence, 380 residues long: Protein arginine N-methyltransferase PRMT10 (380 aa).

One can recognise an SAM-dependent MTase PRMT-type domain in the interval 26-357 (EVDFANYFCT…KENHRLMDME (332 aa)). Residues Q42, R51, G75, E97, and E126 each coordinate S-adenosyl-L-methionine. Active-site residues include E140 and E149. Residues 187–227 (ENKMEDLEIAMHDWNLFVEDTESYYGVNMNVLTKAYRAEHE) are dimerization arm.

Belongs to the class I-like SAM-binding methyltransferase superfamily. Protein arginine N-methyltransferase family. Ring-like homodimer.

The catalysed reaction is L-arginyl-[protein] + 2 S-adenosyl-L-methionine = N(omega),N(omega)-dimethyl-L-arginyl-[protein] + 2 S-adenosyl-L-homocysteine + 2 H(+). Methylates (mono and asymmetric dimethylation) the guanidino nitrogens of arginyl residues in some proteins. The sequence is that of Protein arginine N-methyltransferase PRMT10 (PRMT10) from Oryza sativa subsp. japonica (Rice).